The sequence spans 179 residues: Ribulose bisphosphate carboxylase small subunit, chloroplastic 2 (179 aa).

The transit peptide at 1–58 directs the protein to the chloroplast; it reads MASSATMLSSVATAACVAPAQASMVAPFVGLKSASAFPVTQKTVTGLSTLPSNGGRVQ.

This sequence belongs to the RuBisCO small chain family. As to quaternary structure, heterohexadecamer of 8 large and 8 small subunits.

It localises to the plastid. Its subcellular location is the chloroplast. In terms of biological role, ruBisCO catalyzes two reactions: the carboxylation of D-ribulose 1,5-bisphosphate, the primary event in carbon dioxide fixation, as well as the oxidative fragmentation of the pentose substrate. Both reactions occur simultaneously and in competition at the same active site. Although the small subunit is not catalytic it is essential for maximal activity. The chain is Ribulose bisphosphate carboxylase small subunit, chloroplastic 2 from Fritillaria agrestis (Stinkbells).